Consider the following 231-residue polypeptide: Ion-translocating oxidoreductase complex subunit E (231 aa).

6 consecutive transmembrane segments (helical) span residues 18-38, 39-59, 63-83, 86-106, 125-145, and 182-202; these read ALVQLLGLCPLLAVTSTATNA, LGLGLATTLVLTLTNLTISTL, TPAEIRIPIYVMIIASVVSAV, LINAYAFGLYQSLGIFIPLIV, ALSALDGFSIGMGATCAMFVL, and PFLLAMLPPGAFIGLGLMLAG.

Belongs to the NqrDE/RnfAE family. The complex is composed of six subunits: RsxA, RsxB, RsxC, RsxD, RsxE and RsxG.

The protein localises to the cell inner membrane. In terms of biological role, part of a membrane-bound complex that couples electron transfer with translocation of ions across the membrane. Required to maintain the reduced state of SoxR. The chain is Ion-translocating oxidoreductase complex subunit E from Escherichia coli (strain ATCC 8739 / DSM 1576 / NBRC 3972 / NCIMB 8545 / WDCM 00012 / Crooks).